Reading from the N-terminus, the 430-residue chain is MLSATKRYLATAAAAAATNTTTTSKAFTNTTSQLGRATLTIKDGPVFNGYSFGANRNVSGEAVFTTSLVGYPESMTDPSYRGQILCFTQPLIGNYGVPSSTAKDQFNLLKYMESPKVQCIGIVVADAALEYSHWTAVESLQQWCKRSGVAAITGVDTRQLVSYLRDKGSSLGRITIGEEYDADEDAAFEDPGAINLVHKVTTKAPFHIACPPQYSKGIHIAVLDCGAKENILRCLVERGASLTVFPYDYPIDKIANKFDGIFISNGPGDPTHCSTTVNNLKKIITNHQDLPIFGICLGHQLLALASGAKTIKLKYGNRAHNIPAIDLITGNCHITSQNHGYAVDANTLSENWQPYFTNLNDLSNEGMIHKYQPIFSTQFHPEAKGGPLDTSFLFDKFFDNINVYKKSNGLNLPPVENSLLVDILPKERVE.

A mitochondrion-targeting transit peptide spans 1 to 9; sequence MLSATKRYL. The region spanning 219–407 is the Glutamine amidotransferase type-1 domain; the sequence is HIAVLDCGAK…FDNINVYKKS (189 aa). Catalysis depends on Cys-296, which acts as the Nucleophile. Active-site residues include His-380 and Glu-382.

It belongs to the CarA family. Heterodimer composed of 2 chains; the small (or glutamine) chain promotes the hydrolysis of glutamine to ammonia, which is used by the large (or ammonia) chain to synthesize carbamoyl phosphate.

It is found in the mitochondrion matrix. The enzyme catalyses hydrogencarbonate + L-glutamine + 2 ATP + H2O = carbamoyl phosphate + L-glutamate + 2 ADP + phosphate + 2 H(+). It carries out the reaction L-glutamine + H2O = L-glutamate + NH4(+). It participates in amino-acid biosynthesis; L-arginine biosynthesis; carbamoyl phosphate from bicarbonate: step 1/1. Functionally, small subunit of the arginine-specific carbamoyl phosphate synthase (CPSase). CPSase catalyzes the formation of carbamoyl phosphate from the ammonia moiety of glutamine, carbonate, and phosphate donated by ATP, the first step of the arginine biosynthetic pathway. The small subunit (glutamine amidotransferase) binds and cleaves glutamine to supply the large subunit with the substrate ammonia. The chain is Carbamoyl phosphate synthase arginine-specific small chain (CPA1) from Candida albicans (strain SC5314 / ATCC MYA-2876) (Yeast).